Reading from the N-terminus, the 282-residue chain is Secretory carrier-associated membrane protein 1 (282 aa).

Residues 1–49 (MSRYQSHSFDDGEINPFANPTSVPAATSKLSPLPPEPYDRGATMDIPLD) form a disordered region. Over 1–117 (MSRYQSHSFD…EIPIHLQRIQ (117 aa)) the chain is Cytoplasmic. Residues 18-30 (ANPTSVPAATSKL) show a composition bias toward polar residues. Residue Ser-31 is modified to Phosphoserine. A coiled-coil region spans residues 48 to 93 (LDSGKDLKAKEKELREKEAELKRREQEIKRKEDAIAQAGIVIEEKN). Helical transmembrane passes span 118-138 (YVAF…IVAV), 150-170 (IWFL…VMWY), 185-205 (FGWF…AAVA), and 233-253 (IFYF…IWVI). The Cytoplasmic portion of the chain corresponds to 254-282 (QQVYMYFRGSGKAAEMKQEATRRAMMAAL).

This sequence belongs to the SCAMP family.

The protein localises to the cell membrane. The protein resides in the cytoplasmic vesicle. It localises to the secretory vesicle membrane. Its function is as follows. Probably involved in membrane trafficking. The protein is Secretory carrier-associated membrane protein 1 (SCAMP1) of Arabidopsis thaliana (Mouse-ear cress).